Here is a 317-residue protein sequence, read N- to C-terminus: Small ribosomal subunit biogenesis GTPase RsgA (317 aa).

The 162-residue stretch at 88 to 249 folds into the CP-type G domain; sequence DQYKSKLFAA…LIDSPGFQEF (162 aa). GTP is bound by residues 136–139 and 190–198; these read NKID and GQSGMGKST. Positions 273, 278, 280, and 286 each coordinate Zn(2+).

Belongs to the TRAFAC class YlqF/YawG GTPase family. RsgA subfamily. As to quaternary structure, monomer. Associates with 30S ribosomal subunit, binds 16S rRNA. Zn(2+) serves as cofactor.

The protein localises to the cytoplasm. Functionally, one of several proteins that assist in the late maturation steps of the functional core of the 30S ribosomal subunit. Helps release RbfA from mature subunits. May play a role in the assembly of ribosomal proteins into the subunit. Circularly permuted GTPase that catalyzes slow GTP hydrolysis, GTPase activity is stimulated by the 30S ribosomal subunit. The protein is Small ribosomal subunit biogenesis GTPase RsgA of Paraburkholderia phymatum (strain DSM 17167 / CIP 108236 / LMG 21445 / STM815) (Burkholderia phymatum).